We begin with the raw amino-acid sequence, 82 residues long: Small ribosomal subunit protein eS21 (82 aa).

It belongs to the eukaryotic ribosomal protein eS21 family.

This is Small ribosomal subunit protein eS21 (RPS21) from Oryza sativa subsp. japonica (Rice).